Here is a 299-residue protein sequence, read N- to C-terminus: Formylglycine-generating enzyme (299 aa).

The Cu cation site is built by C263 and C268.

The protein belongs to the sulfatase-modifying factor family. Requires Cu cation as cofactor.

The catalysed reaction is L-cysteinyl-[sulfatase] + 2 a thiol + O2 = an organic disulfide + 3-oxo-L-alanyl-[sulfatase] + hydrogen sulfide + H2O + H(+). It functions in the pathway protein modification; sulfatase oxidation. Its function is as follows. Oxidase that catalyzes the conversion of cysteine to 3-oxoalanine on target proteins. 3-oxoalanine modification, which is also named formylglycine (fGly), occurs in the maturation of arylsulfatases and some alkaline phosphatases that use the hydrated form of 3-oxoalanine as a catalytic nucleophile. This Mycobacterium tuberculosis (strain ATCC 25618 / H37Rv) protein is Formylglycine-generating enzyme.